The sequence spans 877 residues: DNA mismatch repair protein MutS (877 aa).

630-637 (GPNMAGKS) serves as a coordination point for ATP.

Belongs to the DNA mismatch repair MutS family.

Functionally, this protein is involved in the repair of mismatches in DNA. It is possible that it carries out the mismatch recognition step. This protein has a weak ATPase activity. The chain is DNA mismatch repair protein MutS from Jannaschia sp. (strain CCS1).